A 145-amino-acid chain; its full sequence is 3-dehydroquinate dehydratase (145 aa).

The active-site Proton acceptor is the Tyr23. Substrate is bound by residues Asn73, His79, and Asp86. The Proton donor role is filled by His99. Substrate-binding positions include 100–101 (LS) and Arg110.

This sequence belongs to the type-II 3-dehydroquinase family. As to quaternary structure, homododecamer.

The enzyme catalyses 3-dehydroquinate = 3-dehydroshikimate + H2O. Its pathway is metabolic intermediate biosynthesis; chorismate biosynthesis; chorismate from D-erythrose 4-phosphate and phosphoenolpyruvate: step 3/7. In terms of biological role, catalyzes a trans-dehydration via an enolate intermediate. This is 3-dehydroquinate dehydratase from Desulfitobacterium hafniense (strain DSM 10664 / DCB-2).